Consider the following 244-residue polypeptide: Cell division protein ZapD (244 aa).

It belongs to the ZapD family. As to quaternary structure, interacts with FtsZ.

It localises to the cytoplasm. Cell division factor that enhances FtsZ-ring assembly. Directly interacts with FtsZ and promotes bundling of FtsZ protofilaments, with a reduction in FtsZ GTPase activity. This chain is Cell division protein ZapD, found in Shewanella oneidensis (strain ATCC 700550 / JCM 31522 / CIP 106686 / LMG 19005 / NCIMB 14063 / MR-1).